Here is an 83-residue protein sequence, read N- to C-terminus: Protein Vpr (83 aa).

Ser-79 carries the post-translational modification Phosphoserine; by host.

Interacts with human UNG.

It localises to the virion. It is found in the host nucleus. Its function is as follows. Stimulates gene expression driven by the HIV-2 LTR. Prevents infected cells from undergoing mitosis and proliferating, by inducing arrest or delay in the G2 phase of the cell cycle. Cell cycle arrest creates a favorable environment for maximizing viral expression and production. This Pan troglodytes (Chimpanzee) protein is Protein Vpr.